A 192-amino-acid polypeptide reads, in one-letter code: Ribosomal RNA small subunit methyltransferase G (192 aa).

Residues G63, F68, I112–E113, and R125 each bind S-adenosyl-L-methionine.

This sequence belongs to the methyltransferase superfamily. RNA methyltransferase RsmG family.

It localises to the cytoplasm. It catalyses the reaction guanosine(527) in 16S rRNA + S-adenosyl-L-methionine = N(7)-methylguanosine(527) in 16S rRNA + S-adenosyl-L-homocysteine. In terms of biological role, specifically methylates the N7 position of guanine in position 527 of 16S rRNA. This chain is Ribosomal RNA small subunit methyltransferase G, found in Rickettsia felis (strain ATCC VR-1525 / URRWXCal2) (Rickettsia azadi).